The following is a 441-amino-acid chain: ATP-dependent protease ATPase subunit HslU (441 aa).

ATP contacts are provided by residues valine 18, 60–65 (GVGKTE), aspartate 253, glutamate 319, and arginine 391.

It belongs to the ClpX chaperone family. HslU subfamily. A double ring-shaped homohexamer of HslV is capped on each side by a ring-shaped HslU homohexamer. The assembly of the HslU/HslV complex is dependent on binding of ATP.

The protein resides in the cytoplasm. ATPase subunit of a proteasome-like degradation complex; this subunit has chaperone activity. The binding of ATP and its subsequent hydrolysis by HslU are essential for unfolding of protein substrates subsequently hydrolyzed by HslV. HslU recognizes the N-terminal part of its protein substrates and unfolds these before they are guided to HslV for hydrolysis. In Nitratidesulfovibrio vulgaris (strain DP4) (Desulfovibrio vulgaris), this protein is ATP-dependent protease ATPase subunit HslU.